A 353-amino-acid polypeptide reads, in one-letter code: MTAIIERRESANLWSRFCDWITSTENRLYIGWFGVLMIPTLLTATSVFIIAFIAAPPVDIDGIREPVSGSLLYGNNIISGAIIPTSAAIGLHFYPIWEAASVDEWLYNGGPYELIVLHFLLGVACYMGREWELSFRLGMRPWIAVAYSAPVAAATAVFLIYPIGQGSFSDGMPLGISGTFNFMIVFQAEHNILMHPFHMLGVAGVFGGSLFSAMHGSLVTSSLIRETTENQSANAGYKFGQEEETYNIVAAHGYFGRLIFQYASFNNSRSLHFFLAAWPVAGIWFTALGISTMAFNLNGFNFNQSVVDSQGRVINTWADIINRANLGMEVMHERNAHNFPLDLAAVESISIGG.

Thr-2 carries the post-translational modification N-acetylthreonine. Thr-2 bears the Phosphothreonine mark. Helical transmembrane passes span 29 to 46, 118 to 133, and 142 to 156; these read YIGWFGVLMIPTLLTATS, HFLLGVACYMGREWEL, and WIAVAYSAPVAAATA. His-118 contributes to the chlorophyll a binding site. A pheophytin a-binding site is contributed by Tyr-126. Residues Asp-170 and Glu-189 each coordinate [CaMn4O5] cluster. Residues 197–218 form a helical membrane-spanning segment; sequence FHMLGVAGVFGGSLFSAMHGSL. His-198 contacts chlorophyll a. Residues His-215 and 264 to 265 each bind a quinone; that span reads SF. His-215 contributes to the Fe cation binding site. Residue His-272 coordinates Fe cation. The chain crosses the membrane as a helical span at residues 274–288; that stretch reads FLAAWPVAGIWFTAL. Positions 332, 333, 342, and 344 each coordinate [CaMn4O5] cluster. The propeptide occupies 345 to 353; that stretch reads AVESISIGG.

Belongs to the reaction center PufL/M/PsbA/D family. As to quaternary structure, PSII is composed of 1 copy each of membrane proteins PsbA, PsbB, PsbC, PsbD, PsbE, PsbF, PsbH, PsbI, PsbJ, PsbK, PsbL, PsbM, PsbT, PsbX, PsbY, PsbZ, Psb30/Ycf12, at least 3 peripheral proteins of the oxygen-evolving complex and a large number of cofactors. It forms dimeric complexes. It depends on The D1/D2 heterodimer binds P680, chlorophylls that are the primary electron donor of PSII, and subsequent electron acceptors. It shares a non-heme iron and each subunit binds pheophytin, quinone, additional chlorophylls, carotenoids and lipids. D1 provides most of the ligands for the Mn4-Ca-O5 cluster of the oxygen-evolving complex (OEC). There is also a Cl(-1) ion associated with D1 and D2, which is required for oxygen evolution. The PSII complex binds additional chlorophylls, carotenoids and specific lipids. as a cofactor. In terms of processing, tyr-161 forms a radical intermediate that is referred to as redox-active TyrZ, YZ or Y-Z. C-terminally processed by CTPA; processing is essential to allow assembly of the oxygen-evolving complex and thus photosynthetic growth.

The protein localises to the plastid. It localises to the chloroplast thylakoid membrane. It carries out the reaction 2 a plastoquinone + 4 hnu + 2 H2O = 2 a plastoquinol + O2. In terms of biological role, photosystem II (PSII) is a light-driven water:plastoquinone oxidoreductase that uses light energy to abstract electrons from H(2)O, generating O(2) and a proton gradient subsequently used for ATP formation. It consists of a core antenna complex that captures photons, and an electron transfer chain that converts photonic excitation into a charge separation. The D1/D2 (PsbA/PsbD) reaction center heterodimer binds P680, the primary electron donor of PSII as well as several subsequent electron acceptors. The chain is Photosystem II protein D1 from Pinus contorta (Shore pine).